The chain runs to 346 residues: GTP-binding RHO-like protein (346 aa).

Basic residues predominate over residues 1 to 10; it reads MTPNGSRRHS. The tract at residues 1–25 is disordered; the sequence is MTPNGSRRHSAYMGSPRSQHSSTME. The segment covering 16 to 25 has biased composition (polar residues); it reads PRSQHSSTME. 82–89 contributes to the GTP binding site; the sequence is GDGGCGKT. Residues 104 to 112 carry the Effector region motif; sequence YVPTVFENY. GTP contacts are provided by residues 130–134 and 188–191; these read DTAGQ and TKSD. The segment at 259-294 is disordered; that stretch reads LGGSNGGSGNHSRHHSRNYSNVSNNRRGHLKNTSYD. Cysteine methyl ester is present on C343. A lipid anchor (S-geranylgeranyl cysteine) is attached at C343. A propeptide spans 344–346 (removed in mature form); sequence VIL.

It belongs to the small GTPase superfamily. Rho family.

Its subcellular location is the cell membrane. In Candida albicans (strain WO-1) (Yeast), this protein is GTP-binding RHO-like protein (CRL1).